A 79-amino-acid chain; its full sequence is Acyl carrier protein (79 aa).

Residues serine 2–alanine 77 form the Carrier domain. At serine 37 the chain carries O-(pantetheine 4'-phosphoryl)serine.

This sequence belongs to the acyl carrier protein (ACP) family. In terms of processing, 4'-phosphopantetheine is transferred from CoA to a specific serine of apo-ACP by AcpS. This modification is essential for activity because fatty acids are bound in thioester linkage to the sulfhydryl of the prosthetic group.

The protein resides in the cytoplasm. Its pathway is lipid metabolism; fatty acid biosynthesis. Carrier of the growing fatty acid chain in fatty acid biosynthesis. The protein is Acyl carrier protein of Xylella fastidiosa (strain M23).